Consider the following 104-residue polypeptide: Flagellar hook-basal body complex protein FliE (104 aa).

It belongs to the FliE family.

The protein localises to the bacterial flagellum basal body. This is Flagellar hook-basal body complex protein FliE from Salmonella typhi.